A 439-amino-acid chain; its full sequence is MRFQLCYLLGLLSVTSLSHAASNLICYYDSTSYLRQGLAKMHTHELDLALQFCTHLVYGYAGLKAGTLELFSLNVDLDMFYYKEITALRQKFPQLKILLSVGGDRDVDEAHPNKYVELLEANRTFQQNFIDSSMILVKRNGFDGLDLAFQLPRNKPRKVHGSLGTYWKSFKKLFTGDFVVDPLAEQHKSQFTDLVGNLKNAFRSANLMLSLTVLPNVNSTWYFDVPKLHPQFEYINLAAFDFLTPVRNPEEADFTAPIFFQDEQNRLPHLNVEFQVNYWLQNNCPGQKLNLGIASYGRAWKLSKGSGLSGAPIVQETCGAAPGGIQIQSADGLLSWPEICSKLSQNASAQYRGEMAPLRKVTDLTQKYGNYALRPADDNGDFGVWLSFDDPDFAGIKAAYAKGKGLGGVAIFDLSYDDFRGLCTGQKFPIVRSIKYFMG.

A signal peptide spans 1-20 (MRFQLCYLLGLLSVTSLSHA). The region spanning 22–439 (SNLICYYDST…IVRSIKYFMG (418 aa)) is the GH18 domain. A disulfide bridge connects residues Cys26 and Cys53. N-linked (GlcNAc...) asparagine glycans are attached at residues Asn122, Asn218, and Asn346. A disulfide bond links Cys340 and Cys423.

The protein belongs to the glycosyl hydrolase 18 family. IDGF subfamily. Glycosylated.

The protein localises to the secreted. Cooperates with insulin-like peptides to stimulate the proliferation, polarization and motility of imaginal disk cells. May act by stabilizing the binding of insulin-like peptides to its receptor through a simultaneous interaction with both molecules to form a multiprotein signaling complex. This chain is Chitinase-like protein Idgf1 (Idgf1), found in Drosophila yakuba (Fruit fly).